Consider the following 130-residue polypeptide: MTRSSVLADALNAINNAEKTGKRQVLLRPSSKVIIKFLQVMQKHGYIGEFEYIDDHRSGKIVVQLNGRLNKCGVISPRFNVKIGDIEKWTANLLPARQFGYVILTTSAGIMDHEEARRKHVSGKILGFVY.

The protein belongs to the universal ribosomal protein uS8 family. Component of the small ribosomal subunit (SSU). Mature yeast ribosomes consist of a small (40S) and a large (60S) subunit. The 40S small subunit contains 1 molecule of ribosomal RNA (18S rRNA) and 33 different proteins (encoded by 57 genes). The large 60S subunit contains 3 rRNA molecules (25S, 5.8S and 5S rRNA) and 46 different proteins (encoded by 81 genes).

The protein resides in the cytoplasm. Functionally, component of the ribosome, a large ribonucleoprotein complex responsible for the synthesis of proteins in the cell. The small ribosomal subunit (SSU) binds messenger RNAs (mRNAs) and translates the encoded message by selecting cognate aminoacyl-transfer RNA (tRNA) molecules. The large subunit (LSU) contains the ribosomal catalytic site termed the peptidyl transferase center (PTC), which catalyzes the formation of peptide bonds, thereby polymerizing the amino acids delivered by tRNAs into a polypeptide chain. The nascent polypeptides leave the ribosome through a tunnel in the LSU and interact with protein factors that function in enzymatic processing, targeting, and the membrane insertion of nascent chains at the exit of the ribosomal tunnel. The sequence is that of Small ribosomal subunit protein uS8B from Saccharomyces cerevisiae (strain ATCC 204508 / S288c) (Baker's yeast).